Here is a 583-residue protein sequence, read N- to C-terminus: Proline--tRNA ligase (583 aa).

It belongs to the class-II aminoacyl-tRNA synthetase family. ProS type 1 subfamily. As to quaternary structure, homodimer.

It localises to the cytoplasm. It catalyses the reaction tRNA(Pro) + L-proline + ATP = L-prolyl-tRNA(Pro) + AMP + diphosphate. Its function is as follows. Catalyzes the attachment of proline to tRNA(Pro) in a two-step reaction: proline is first activated by ATP to form Pro-AMP and then transferred to the acceptor end of tRNA(Pro). As ProRS can inadvertently accommodate and process non-cognate amino acids such as alanine and cysteine, to avoid such errors it has two additional distinct editing activities against alanine. One activity is designated as 'pretransfer' editing and involves the tRNA(Pro)-independent hydrolysis of activated Ala-AMP. The other activity is designated 'posttransfer' editing and involves deacylation of mischarged Ala-tRNA(Pro). The misacylated Cys-tRNA(Pro) is not edited by ProRS. The chain is Proline--tRNA ligase from Acidothermus cellulolyticus (strain ATCC 43068 / DSM 8971 / 11B).